We begin with the raw amino-acid sequence, 78 residues long: UPF0235 protein AF_2072 (78 aa).

It belongs to the UPF0235 family.

This Archaeoglobus fulgidus (strain ATCC 49558 / DSM 4304 / JCM 9628 / NBRC 100126 / VC-16) protein is UPF0235 protein AF_2072.